Here is a 334-residue protein sequence, read N- to C-terminus: N-acetyl-gamma-glutamyl-phosphate reductase (334 aa).

Cys154 is an active-site residue.

The protein belongs to the NAGSA dehydrogenase family. Type 1 subfamily.

It is found in the cytoplasm. The catalysed reaction is N-acetyl-L-glutamate 5-semialdehyde + phosphate + NADP(+) = N-acetyl-L-glutamyl 5-phosphate + NADPH + H(+). It functions in the pathway amino-acid biosynthesis; L-arginine biosynthesis; N(2)-acetyl-L-ornithine from L-glutamate: step 3/4. In terms of biological role, catalyzes the NADPH-dependent reduction of N-acetyl-5-glutamyl phosphate to yield N-acetyl-L-glutamate 5-semialdehyde. This Buchnera aphidicola subsp. Acyrthosiphon pisum (strain 5A) protein is N-acetyl-gamma-glutamyl-phosphate reductase.